A 410-amino-acid chain; its full sequence is Cytohesin-2 (410 aa).

Positions 13–56 (PEERMELENIRRRKQELLVEIQRLREELSEAMSEVEGLEANEGS) form a coiled coil. The SEC7 domain occupies 54–241 (EGSKTLQRNR…RNLYDSIRNE (188 aa)). Residues 259-386 (NPDREGWLLK…WIKSIQAAVS (128 aa)) enclose the PH domain. Residues 268–271 (KLGA), R290, Y301, R311, K349, N360, and H361 contribute to the a 1,2-diacyl-sn-glycero-3-phospho-(1D-myo-inositol-3,4,5-trisphosphate) site. Positions 397–405 (RKKRISVKK) are C-terminal autoinhibitory region.

Heteromer. Composed of TAMALIN, CYTH2 and at least one GRM1. Interacts with ARRB1. Interacts with ARL4D; the interaction is direct. Directly interacts with CCDC120 through the coiled coil domain; this interaction stabilizes CCDC120, possibly by preventing its ubiquitination, and is required for neurite growth in neuroblastoma cells. Interacts (via N-terminal domain) with INAVA (via N-terminal domain).

The protein localises to the cell membrane. Its subcellular location is the cytoplasm. It is found in the cell projection. It localises to the growth cone. Functionally, acts as a guanine-nucleotide exchange factor (GEF). Promotes guanine-nucleotide exchange on ARF1, ARF3 and ARF6. Promotes the activation of ARF factors through replacement of GDP with GTP. The cell membrane form, in association with ARL4 proteins, recruits ARF6 to the plasma membrane. Involved in neurite growth. This Bos taurus (Bovine) protein is Cytohesin-2 (CYTH2).